We begin with the raw amino-acid sequence, 302 residues long: Putative receptor-like protein 16 (302 aa).

LRR repeat units lie at residues 1 to 19 (MNLT…LGNM), 20 to 43 (EMIE…FLKG), and 45 to 70 (DSLI…NFFS). Residues 72 to 91 (LELSMDNNLFTGKIGRGLQS) form an LRR 4; degenerate repeat. LRR repeat units lie at residues 92–115 (LRSL…WFDQ), 116–140 (LQDL…LFNM), 142–164 (SLQL…ISGY), 166–188 (ALKV…LLGK), 190–211 (IIVL…INTQ), 213–234 (IRIL…LCAV), and 235–258 (RSIH…LRNA).

The protein belongs to the RLP family.

The polypeptide is Putative receptor-like protein 16 (Arabidopsis thaliana (Mouse-ear cress)).